Reading from the N-terminus, the 443-residue chain is ATP-dependent protease ATPase subunit HslU (443 aa).

Residues I18, 60 to 65 (GVGKTE), D256, E321, and R393 contribute to the ATP site.

The protein belongs to the ClpX chaperone family. HslU subfamily. A double ring-shaped homohexamer of HslV is capped on each side by a ring-shaped HslU homohexamer. The assembly of the HslU/HslV complex is dependent on binding of ATP.

The protein resides in the cytoplasm. ATPase subunit of a proteasome-like degradation complex; this subunit has chaperone activity. The binding of ATP and its subsequent hydrolysis by HslU are essential for unfolding of protein substrates subsequently hydrolyzed by HslV. HslU recognizes the N-terminal part of its protein substrates and unfolds these before they are guided to HslV for hydrolysis. The chain is ATP-dependent protease ATPase subunit HslU from Salmonella arizonae (strain ATCC BAA-731 / CDC346-86 / RSK2980).